A 105-amino-acid chain; its full sequence is Small ribosomal subunit protein uS10 (105 aa).

Belongs to the universal ribosomal protein uS10 family. Part of the 30S ribosomal subunit.

Functionally, involved in the binding of tRNA to the ribosomes. The sequence is that of Small ribosomal subunit protein uS10 from Synechococcus sp. (strain JA-3-3Ab) (Cyanobacteria bacterium Yellowstone A-Prime).